Consider the following 353-residue polypeptide: Uroporphyrinogen decarboxylase (353 aa).

Substrate-binding positions include 35 to 39 (RQAGR), Phe-54, Asp-84, Tyr-160, Ser-215, and His-329.

It belongs to the uroporphyrinogen decarboxylase family. As to quaternary structure, homodimer.

The protein resides in the cytoplasm. It carries out the reaction uroporphyrinogen III + 4 H(+) = coproporphyrinogen III + 4 CO2. Its pathway is porphyrin-containing compound metabolism; protoporphyrin-IX biosynthesis; coproporphyrinogen-III from 5-aminolevulinate: step 4/4. Its function is as follows. Catalyzes the decarboxylation of four acetate groups of uroporphyrinogen-III to yield coproporphyrinogen-III. The sequence is that of Uroporphyrinogen decarboxylase from Staphylococcus epidermidis (strain ATCC 12228 / FDA PCI 1200).